The following is a 138-amino-acid chain: Putative pre-16S rRNA nuclease (138 aa).

The protein belongs to the YqgF nuclease family.

The protein localises to the cytoplasm. Could be a nuclease involved in processing of the 5'-end of pre-16S rRNA. The chain is Putative pre-16S rRNA nuclease from Polaromonas sp. (strain JS666 / ATCC BAA-500).